The primary structure comprises 285 residues: Tetraspanin-3 (285 aa).

The Cytoplasmic segment spans residues 1–6 (MRTSNH). Residues 7–27 (LIGLVNFLTFLLSIPILGGGI) form a helical membrane-spanning segment. Residues 28 to 43 (WLSSRANSTDCLRFLQ) lie on the Extracellular side of the membrane. Asn34 carries N-linked (GlcNAc...) asparagine glycosylation. Residues 44–64 (WPLIVIGISIMVVSLAGFAGA) form a helical membrane-spanning segment. Over 65 to 71 (CYRNKFL) the chain is Cytoplasmic. Residues 72–92 (MWLYLVVMLLIIAALIGFIIF) form a helical membrane-spanning segment. The Extracellular portion of the chain corresponds to 93 to 235 (AYAVTDKGSG…LGSLKKSWRK (143 aa)). Asn187 carries N-linked (GlcNAc...) asparagine glycosylation. A helical membrane pass occupies residues 236–256 (VSVINIVVLIILVIFYVIAYA). The Cytoplasmic segment spans residues 257–285 (AYRNVKRIDNDEPAGEARMTKSHPSHFHL).

The protein belongs to the tetraspanin (TM4SF) family.

Its subcellular location is the cell membrane. May be involved in the regulation of cell differentiation. This is Tetraspanin-3 (TET3) from Arabidopsis thaliana (Mouse-ear cress).